The primary structure comprises 492 residues: Nuclear autoantigenic sperm protein homolog (492 aa).

Positions 1 to 14 are enriched in low complexity; it reads MSAEAEAIVTTATA. Disordered stretches follow at residues 1–52 and 123–254; these read MSAE…EQER and DVPD…EEGV. Phosphothreonine is present on residues threonine 32 and threonine 33. Residues 124 to 145 are compositionally biased toward acidic residues; that stretch reads VPDEAADDDDEDVDDDEEESAE. Composition is skewed to basic and acidic residues over residues 147 to 159 and 170 to 179; these read GAAK…DTKE and KELDTIKEGS. Serine 179 and serine 184 each carry phosphoserine. The residue at position 185 (threonine 185) is a Phosphothreonine. Position 193 is a phosphoserine (serine 193). Residues 226 to 238 are compositionally biased toward polar residues; sequence STSNGEVTASCSN. Over residues 244-253 the composition is skewed to acidic residues; the sequence is VEEEPEEEEG. 2 TPR repeats span residues 284 to 317 and 326 to 359; these read AEVQ…HGEL and AELH…IEEE. Residues 377–400 adopt a coiled-coil conformation; sequence MLDLEETKQEILAKIQEIEEMQAQ. The span at 418 to 459 shows a compositional bias: low complexity; the sequence is SGDAAAASSSSSSSANGAASSSSSSSKGAAAASSSTISSSSA. Residues 418 to 492 are disordered; it reads SGDAAAASSS…LCSPAKRAAV (75 aa). A phosphoserine mark is found at serine 478 and serine 485.

The protein belongs to the NASP family. As to quaternary structure, interacts with the histone H3-H4 heterodimer; the interaction with H4 is probably indirect and mediated by H3 (His3, His3.3A and His3.3B). Interacts with His2Av; this interaction directly or indirectly destabilizes His2Av.

The protein resides in the cytoplasm. It localises to the nucleus. Its subcellular location is the perinuclear region. Component of the histone chaperone network. Binds and stabilizes histone H3-H4 not bound to chromatin to maintain a soluble reservoir and modulate degradation by chaperone-mediated autophagy. May also bind and stabilize monomeric H3. Maternal effect gene essential for early embryogenesis. This chain is Nuclear autoantigenic sperm protein homolog, found in Drosophila melanogaster (Fruit fly).